The chain runs to 529 residues: Bifunctional purine biosynthesis protein PurH (529 aa).

The MGS-like domain maps to 1-148; sequence MNNVRPIRRA…KNHKDTTIVV (148 aa).

This sequence belongs to the PurH family.

It carries out the reaction (6R)-10-formyltetrahydrofolate + 5-amino-1-(5-phospho-beta-D-ribosyl)imidazole-4-carboxamide = 5-formamido-1-(5-phospho-D-ribosyl)imidazole-4-carboxamide + (6S)-5,6,7,8-tetrahydrofolate. The catalysed reaction is IMP + H2O = 5-formamido-1-(5-phospho-D-ribosyl)imidazole-4-carboxamide. It functions in the pathway purine metabolism; IMP biosynthesis via de novo pathway; 5-formamido-1-(5-phospho-D-ribosyl)imidazole-4-carboxamide from 5-amino-1-(5-phospho-D-ribosyl)imidazole-4-carboxamide (10-formyl THF route): step 1/1. It participates in purine metabolism; IMP biosynthesis via de novo pathway; IMP from 5-formamido-1-(5-phospho-D-ribosyl)imidazole-4-carboxamide: step 1/1. This is Bifunctional purine biosynthesis protein PurH from Shewanella frigidimarina (strain NCIMB 400).